The sequence spans 255 residues: Hydroxyacylglutathione hydrolase (255 aa).

Zn(2+) is bound by residues His-56, His-58, Asp-60, His-61, His-114, Asp-133, and His-171.

This sequence belongs to the metallo-beta-lactamase superfamily. Glyoxalase II family. In terms of assembly, monomer. Zn(2+) serves as cofactor.

It carries out the reaction an S-(2-hydroxyacyl)glutathione + H2O = a 2-hydroxy carboxylate + glutathione + H(+). The protein operates within secondary metabolite metabolism; methylglyoxal degradation; (R)-lactate from methylglyoxal: step 2/2. In terms of biological role, thiolesterase that catalyzes the hydrolysis of S-D-lactoyl-glutathione to form glutathione and D-lactic acid. The polypeptide is Hydroxyacylglutathione hydrolase (Mesorhizobium japonicum (strain LMG 29417 / CECT 9101 / MAFF 303099) (Mesorhizobium loti (strain MAFF 303099))).